A 343-amino-acid chain; its full sequence is Protein RecA (343 aa).

64 to 71 (GPESSGKT) contributes to the ATP binding site.

It belongs to the RecA family.

Its subcellular location is the cytoplasm. Functionally, can catalyze the hydrolysis of ATP in the presence of single-stranded DNA, the ATP-dependent uptake of single-stranded DNA by duplex DNA, and the ATP-dependent hybridization of homologous single-stranded DNAs. It interacts with LexA causing its activation and leading to its autocatalytic cleavage. In Bacillus cereus (strain ATCC 10987 / NRS 248), this protein is Protein RecA.